The sequence spans 297 residues: Alarmin release inhibitor (297 aa).

Asn-107, Asn-175, and Asn-190 each carry an N-linked (GlcNAc...) asparagine glycan. Residues 151-211 (TYDPTPNTPT…WVPTLGVCPK (61 aa)) enclose the Sushi domain. A disulfide bridge links Cys-183 with Cys-209.

In terms of assembly, interacts with mouse IL33 (in reduced form).

It is found in the secreted. It localises to the host nucleus. In terms of biological role, secreted protein which suppresses the host allergic response by inhibiting the interaction of host IL33 with its receptor in order to maintain parasitic infection. Binds to both host IL33 and host nuclear DNA and this dual binding blocks the interaction of IL33 with its receptor, and tethers IL33 within necrotic cells, preventing its release, and blocking allergic response initiation. This Heligmosomoides polygyrus (Parasitic roundworm) protein is Alarmin release inhibitor.